Reading from the N-terminus, the 64-residue chain is MKQKTHSGIKKRIKKTGSGKLRREQANRRHLLEGKPSTRTRRLKGDTSVSRNDTKRVNRLLGEG.

Residues 1–17 are compositionally biased toward basic residues; that stretch reads MKQKTHSGIKKRIKKTG. The disordered stretch occupies residues 1 to 64; sequence MKQKTHSGIK…KRVNRLLGEG (64 aa). Positions 21–33 are enriched in basic and acidic residues; it reads LRREQANRRHLLE.

It belongs to the bacterial ribosomal protein bL35 family.

This is Large ribosomal subunit protein bL35 from Corynebacterium kroppenstedtii (strain DSM 44385 / JCM 11950 / CIP 105744 / CCUG 35717).